We begin with the raw amino-acid sequence, 234 residues long: Peroxiredoxin (234 aa).

Residues 6-161 form the Thioredoxin domain; that stretch reads PLIGEKLPEM…ILRLLKALQV (156 aa). The active-site Cysteine sulfenic acid (-SOH) intermediate is the cysteine 48. Arginine 124 provides a ligand contact to substrate. A disulfide bond links cysteine 203 and cysteine 209.

It belongs to the peroxiredoxin family. Prx6 subfamily. Homodecamer. Pentamer of dimers that assemble into a ring structure.

It localises to the cytoplasm. The catalysed reaction is a hydroperoxide + [thioredoxin]-dithiol = an alcohol + [thioredoxin]-disulfide + H2O. In terms of biological role, thiol-specific peroxidase that catalyzes the reduction of hydrogen peroxide and organic hydroperoxides to water and alcohols, respectively. Plays a role in cell protection against oxidative stress by detoxifying peroxides. In Ignicoccus hospitalis (strain KIN4/I / DSM 18386 / JCM 14125), this protein is Peroxiredoxin.